Consider the following 428-residue polypeptide: Threonine synthase (428 aa).

Lysine 107 carries the N6-(pyridoxal phosphate)lysine modification.

The protein belongs to the threonine synthase family. Pyridoxal 5'-phosphate serves as cofactor.

The catalysed reaction is O-phospho-L-homoserine + H2O = L-threonine + phosphate. It participates in amino-acid biosynthesis; L-threonine biosynthesis; L-threonine from L-aspartate: step 5/5. Is competitively inhibited by L-threo-3-hydroxyhomoserine phosphate. In terms of biological role, catalyzes the gamma-elimination of phosphate from L-phosphohomoserine and the beta-addition of water to produce L-threonine. To a lesser extent, is able to slowly catalyze the deamination of L-threonine into alpha-ketobutyrate and that of L-serine and 3-chloroalanine into pyruvate. Is also able to rapidly convert vinylglycine to threonine, which proves that the pyridoxal p-quinonoid of vinylglycine is an intermediate in the TS reaction. This is Threonine synthase (thrC) from Escherichia coli (strain K12).